The primary structure comprises 206 residues: LexA repressor (206 aa).

The H-T-H motif DNA-binding region spans 28–48; it reads VREIGQAVGLASSSTVHGHLS. Residues Ser-128 and Lys-166 each act as for autocatalytic cleavage activity in the active site.

The protein belongs to the peptidase S24 family. As to quaternary structure, homodimer.

The catalysed reaction is Hydrolysis of Ala-|-Gly bond in repressor LexA.. Its function is as follows. Represses a number of genes involved in the response to DNA damage (SOS response), including recA and lexA. In the presence of single-stranded DNA, RecA interacts with LexA causing an autocatalytic cleavage which disrupts the DNA-binding part of LexA, leading to derepression of the SOS regulon and eventually DNA repair. In Bacillus cytotoxicus (strain DSM 22905 / CIP 110041 / 391-98 / NVH 391-98), this protein is LexA repressor.